The following is a 993-amino-acid chain: Vinculin (993 aa).

Repeat copies occupy residues 258 to 364 (DSDN…TKEI) and 373 to 480 (TNTQ…ELVD). The interval 258–480 (DSDNVTVMRK…LRNKLRELVD (223 aa)) is 2 X repeats. A disordered region spans residues 730–797 (ITGAGGSRPP…PPPETDDEEE (68 aa)). Positions 758 to 768 (VHDRIYIREDI) are enriched in basic and acidic residues. The segment covering 769–790 (PTPPRPPPPVEISPPPRPPPPP) has biased composition (pro residues).

The protein belongs to the vinculin/alpha-catenin family. Exhibits self-association properties.

The protein resides in the cytoplasm. The protein localises to the cytoskeleton. Its subcellular location is the cell junction. It is found in the adherens junction. It localises to the cell membrane. Functionally, involved in cell adhesion. May be involved in the attachment of the actin-based microfilaments to the plasma membrane. The sequence is that of Vinculin from Brugia malayi (Filarial nematode worm).